Consider the following 272-residue polypeptide: PILR alpha-associated neural protein (272 aa).

The N-terminal stretch at 1–27 (MWPAQLLSQLLPLWPLLLLPLSLPAQG) is a signal peptide. A disordered region spans residues 25–93 (AQGSSHRSPP…PSGFEEGPPS (69 aa)). The Extracellular segment spans residues 28–174 (SSHRSPPAPA…FGGRGEGVDP (147 aa)). The O-linked (GalNAc...) threonine glycan is linked to T136. The chain crosses the membrane as a helical span at residues 175–195 (QLYVTITISIIIVLVATGIIF). Over 196-272 (KFCWDRSQKR…KGAPAFQLNR (77 aa)) the chain is Cytoplasmic. The segment at 205-272 (RRRPSGQQGA…KGAPAFQLNR (68 aa)) is disordered. Over residues 209–225 (SGQQGALRQEESQQPLT) the composition is skewed to polar residues.

O-glycosylation at Thr-136 is essential for recognition by PILRA.

Its subcellular location is the membrane. Acts as a ligand for PILRA in neuronal tissues, where it may be involved in immune regulation. The protein is PILR alpha-associated neural protein (Pianp) of Rattus norvegicus (Rat).